Here is a 523-residue protein sequence, read N- to C-terminus: Bifunctional purine biosynthesis protein PurH (523 aa).

The MGS-like domain maps to 1–145 (MIKQALLSVS…KNHRDVTVIV (145 aa)).

The protein belongs to the PurH family.

The enzyme catalyses (6R)-10-formyltetrahydrofolate + 5-amino-1-(5-phospho-beta-D-ribosyl)imidazole-4-carboxamide = 5-formamido-1-(5-phospho-D-ribosyl)imidazole-4-carboxamide + (6S)-5,6,7,8-tetrahydrofolate. It catalyses the reaction IMP + H2O = 5-formamido-1-(5-phospho-D-ribosyl)imidazole-4-carboxamide. The protein operates within purine metabolism; IMP biosynthesis via de novo pathway; 5-formamido-1-(5-phospho-D-ribosyl)imidazole-4-carboxamide from 5-amino-1-(5-phospho-D-ribosyl)imidazole-4-carboxamide (10-formyl THF route): step 1/1. It functions in the pathway purine metabolism; IMP biosynthesis via de novo pathway; IMP from 5-formamido-1-(5-phospho-D-ribosyl)imidazole-4-carboxamide: step 1/1. The chain is Bifunctional purine biosynthesis protein PurH from Cupriavidus pinatubonensis (strain JMP 134 / LMG 1197) (Cupriavidus necator (strain JMP 134)).